Here is a 447-residue protein sequence, read N- to C-terminus: Biotin carboxylase (447 aa).

The region spanning 1 to 447 (MKFDKILIAN…STSFVQEMNK (447 aa)) is the Biotin carboxylation domain. ATP-binding positions include K117, K159, 165–166 (GG), 201–204 (EKFI), and H209. Residues 121 to 318 (KETMQKAGVP…LLVEQIRIAQ (198 aa)) enclose the ATP-grasp domain. A hydrogencarbonate-binding site is contributed by K238. ATP contacts are provided by E276 and E289. Mg(2+)-binding residues include E276, E289, and N291. Residues E276, E289, and N291 each contribute to the Mn(2+) site. 3 residues coordinate hydrogencarbonate: R293, V296, and R339. R293 is a catalytic residue. R339 lines the biotin pocket.

In terms of assembly, acetyl-CoA carboxylase is a heterohexamer of biotin carboxyl carrier protein, biotin carboxylase and the two subunits of carboxyl transferase in a 2:2 complex. The cofactor is Mg(2+). Requires Mn(2+) as cofactor.

It carries out the reaction N(6)-biotinyl-L-lysyl-[protein] + hydrogencarbonate + ATP = N(6)-carboxybiotinyl-L-lysyl-[protein] + ADP + phosphate + H(+). The protein operates within lipid metabolism; malonyl-CoA biosynthesis; malonyl-CoA from acetyl-CoA: step 1/1. Its function is as follows. This protein is a component of the acetyl coenzyme A carboxylase complex; first, biotin carboxylase catalyzes the carboxylation of the carrier protein and then the transcarboxylase transfers the carboxyl group to form malonyl-CoA. In Nostoc sp. (strain PCC 7120 / SAG 25.82 / UTEX 2576), this protein is Biotin carboxylase (accC).